We begin with the raw amino-acid sequence, 176 residues long: 3-hydroxyanthranilate 3,4-dioxygenase (176 aa).

Arginine 44 provides a ligand contact to O2. 3 residues coordinate Fe cation: histidine 48, glutamate 54, and histidine 92. Glutamate 54 contributes to the substrate binding site. Arginine 96 and glutamate 106 together coordinate substrate. Fe cation-binding residues include cysteine 121, cysteine 124, cysteine 158, and cysteine 161.

It belongs to the 3-HAO family. As to quaternary structure, homodimer. It depends on Fe(2+) as a cofactor.

It carries out the reaction 3-hydroxyanthranilate + O2 = (2Z,4Z)-2-amino-3-carboxymuconate 6-semialdehyde. It functions in the pathway cofactor biosynthesis; NAD(+) biosynthesis; quinolinate from L-kynurenine: step 3/3. Functionally, catalyzes the oxidative ring opening of 3-hydroxyanthranilate to 2-amino-3-carboxymuconate semialdehyde, which spontaneously cyclizes to quinolinate. This chain is 3-hydroxyanthranilate 3,4-dioxygenase, found in Xanthomonas euvesicatoria pv. vesicatoria (strain 85-10) (Xanthomonas campestris pv. vesicatoria).